The sequence spans 205 residues: Putative epidermin response regulator (205 aa).

The segment at residues 103–200 (KYIKYVNDDF…ERKLGYKILI (98 aa)) is a DNA-binding region (ompR/PhoB-type).

To the C-terminus of E.coli phosphate regulon transcriptional regulatory protein PhoB.

This is Putative epidermin response regulator (epiQ) from Staphylococcus epidermidis.